Here is a 252-residue protein sequence, read N- to C-terminus: uncharacterized protein (252 aa).

2 stretches are compositionally biased toward polar residues: residues 108 to 122 (RTTM…SSSE) and 136 to 153 (MPNT…NSQS). Residues 108-252 (RTTMRQGRFP…LIWNDSSSSK (145 aa)) are disordered. Residues 154 to 172 (TEKEDAMYSKDNGFEDRSK) are compositionally biased toward basic and acidic residues. Polar residues predominate over residues 201 to 226 (VKSTDSAFSGQENSEAFPSRTSNLGS).

The protein localises to the cytoplasm. The protein resides in the mitochondrion. It localises to the nucleus. This is an uncharacterized protein from Schizosaccharomyces pombe (strain 972 / ATCC 24843) (Fission yeast).